The chain runs to 401 residues: Dual-specificity RNA methyltransferase RlmN (401 aa).

E114 serves as the catalytic Proton acceptor. The Radical SAM core domain maps to 120–365; the sequence is DKTRGTLCVS…TMVRRTRGDD (246 aa). An intrachain disulfide couples C127 to C370. The [4Fe-4S] cluster site is built by C134, C138, and C141. Residues 187 to 188, S219, 241 to 243, and N327 each bind S-adenosyl-L-methionine; these read GE and SLH. The S-methylcysteine intermediate role is filled by C370.

The protein belongs to the radical SAM superfamily. RlmN family. [4Fe-4S] cluster serves as cofactor.

It localises to the cytoplasm. It carries out the reaction adenosine(2503) in 23S rRNA + 2 reduced [2Fe-2S]-[ferredoxin] + 2 S-adenosyl-L-methionine = 2-methyladenosine(2503) in 23S rRNA + 5'-deoxyadenosine + L-methionine + 2 oxidized [2Fe-2S]-[ferredoxin] + S-adenosyl-L-homocysteine. The catalysed reaction is adenosine(37) in tRNA + 2 reduced [2Fe-2S]-[ferredoxin] + 2 S-adenosyl-L-methionine = 2-methyladenosine(37) in tRNA + 5'-deoxyadenosine + L-methionine + 2 oxidized [2Fe-2S]-[ferredoxin] + S-adenosyl-L-homocysteine. Specifically methylates position 2 of adenine 2503 in 23S rRNA and position 2 of adenine 37 in tRNAs. m2A2503 modification seems to play a crucial role in the proofreading step occurring at the peptidyl transferase center and thus would serve to optimize ribosomal fidelity. In Stenotrophomonas maltophilia (strain K279a), this protein is Dual-specificity RNA methyltransferase RlmN.